The following is a 382-amino-acid chain: Ribonuclease D (382 aa).

The 3'-5' exonuclease domain maps to 4-169 (ITTTAELASV…DVFAALDADL (166 aa)). The HRDC domain maps to 208–289 (KPKDLAVMME…QRGLARDPRE (82 aa)).

It belongs to the RNase D family. It depends on a divalent metal cation as a cofactor.

Its subcellular location is the cytoplasm. It catalyses the reaction Exonucleolytic cleavage that removes extra residues from the 3'-terminus of tRNA to produce 5'-mononucleotides.. In terms of biological role, exonuclease involved in the 3' processing of various precursor tRNAs. Initiates hydrolysis at the 3'-terminus of an RNA molecule and releases 5'-mononucleotides. The polypeptide is Ribonuclease D (Nitrobacter hamburgensis (strain DSM 10229 / NCIMB 13809 / X14)).